Here is an 829-residue protein sequence, read N- to C-terminus: Spindle-defective protein 2 (829 aa).

4 disordered regions span residues 1 to 29 (MNED…DGES), 41 to 104 (EDED…SNDI), 183 to 294 (KKDV…TTSD), and 326 to 471 (RKKR…NGHM). Residues 54–82 (FRLENRYKPSLHTPRELPTIREENREDVR) are compositionally biased toward basic and acidic residues. Positions 83–93 (SNTSSRVNTRP) are enriched in polar residues. Residues 183–216 (KKDVTRKQENVRPGKMMPEKVNDENEPKSRRFSP) show a composition bias toward basic and acidic residues. Polar residues-rich tracts occupy residues 217–230 (ERNT…NSTK) and 266–294 (PQRT…TTSD). A coiled-coil region spans residues 314-332 (VDINLLTALENARKKRDRP). Composition is skewed to low complexity over residues 361–370 (SMTSIVSSST) and 384–408 (NSAT…RVST). 2 stretches are compositionally biased toward polar residues: residues 409–439 (AKND…NSMT) and 448–463 (SVSS…STMT).

The protein resides in the cytoplasm. Its subcellular location is the cytoskeleton. It is found in the microtubule organizing center. It localises to the centrosome. The protein localises to the centriole. Its function is as follows. Required both for centrosome duplication and maturation. Required for pericentriolar material (PCM) recruitment. This is Spindle-defective protein 2 from Caenorhabditis briggsae.